The following is a 555-amino-acid chain: Glucosylglycerate phosphorylase (555 aa).

The active-site Nucleophile is D231.

Belongs to the glycosyl hydrolase 13 family. Glucosylglycerate phosphorylase subfamily.

It carries out the reaction (2R)-2-O-(alpha-D-glucopyranosyl)-glycerate + phosphate = (R)-glycerate + alpha-D-glucose 1-phosphate. Functionally, catalyzes the reversible phosphorolysis of glucosylglycerate into alpha-D-glucose 1-phosphate (Glc1P) and D-glycerate. May be a regulator of intracellular levels of glucosylglycerate, a compatible solute that primarily protects organisms facing salt stress and very specific nutritional constraints. Has a very strict substrate specificity. Cannot catalyze the phosphorolysis of sucrose or synthesize sucrose from Glc1P and D-fructose. The chain is Glucosylglycerate phosphorylase from Allomeiothermus silvanus (strain ATCC 700542 / DSM 9946 / NBRC 106475 / NCIMB 13440 / VI-R2) (Thermus silvanus).